The chain runs to 288 residues: tRNA dimethylallyltransferase (288 aa).

Position 2-9 (2-9 (GPTAAGKS)) interacts with ATP. 4-9 (TAAGKS) is a substrate binding site. Residues 27–30 (DSMQ) form an interaction with substrate tRNA region.

The protein belongs to the IPP transferase family. As to quaternary structure, monomer. The cofactor is Mg(2+).

The enzyme catalyses adenosine(37) in tRNA + dimethylallyl diphosphate = N(6)-dimethylallyladenosine(37) in tRNA + diphosphate. Functionally, catalyzes the transfer of a dimethylallyl group onto the adenine at position 37 in tRNAs that read codons beginning with uridine, leading to the formation of N6-(dimethylallyl)adenosine (i(6)A). The chain is tRNA dimethylallyltransferase from Frankia alni (strain DSM 45986 / CECT 9034 / ACN14a).